The chain runs to 624 residues: MASPNGGVTTYDYDDSDSAAPVRAQTIEELHSLQRKAAATAKDSASPLQSISASLASTAREYGPNLVKGDPEAKGAPPAPVKHQQAAAAAAIAASDSSLKFTHVLYNLSPAELYEQAFGQKKSSFITSTGALATLSGAKTGRSPRDKRVVKDDTTAQELWWGKGSPNIEMDERQFVINRERALDFLNSLDKVYVNDQFLNWDPENRIKVRIITSRAYHALFMHNMCIRPTEEELETFGTPDFTIYNAGEFPANRYANYMTSSTSINISLARREMVILGTQYAGEMKKGLFGVMHYLMPKRGILSLHSGCNMGKEGDVALFFGLSGTGKTTLSTDHNRLLIGDDEHCWSDNGVSNIEGGCYAKCIDLSKEKEPDIWNAITFGTVLENVVFNERTREVDYADKSITENTRAAYPIEFIPNAKIPCVGPHPKNVILLACDAYGVLPPVSKLNLAQTMYHFISGYTAIVAGTEDGVKEPTATFSACFGAAFIMYHPTKYAAMLAEKMQKYGRTGWLVNTGWSGGRYGVGNRIKLPYTRKIIDAIHSGELLTANYKKTEVFGLEIPTEINGVPSEILDPVNTWTDKAAYKETLLKLAGLFKNNFEVFASYKIGDDNSLTEQILAAGPNF.

Residues 1–22 (MASPNGGVTTYDYDDSDSAAPV) are disordered. Position 322-329 (322-329 (GLSGTGKT)) interacts with ATP.

This sequence belongs to the phosphoenolpyruvate carboxykinase (ATP) family. In terms of assembly, homohexamer. In terms of tissue distribution, green leaves but not in roots or etiolated shoots.

It localises to the cytoplasm. The catalysed reaction is oxaloacetate + ATP = phosphoenolpyruvate + ADP + CO2. Its pathway is carbohydrate biosynthesis; gluconeogenesis. The protein is Phosphoenolpyruvate carboxykinase (ATP) 1 (PCK1) of Urochloa panicoides (Panic liverseed grass).